We begin with the raw amino-acid sequence, 479 residues long: Zinc metalloproteinase/disintegrin PMMP-1 (479 aa).

The first 20 residues, 1–20 (MIQVLLVTICLAVFPYQGSS), serve as a signal peptide directing secretion. A propeptide spanning residues 21–188 (IILESGNVND…PIKKASKLVV (168 aa)) is cleaved from the precursor. Residues 194–390 (RYVELVIVAD…HNPQCILNKP (197 aa)) form the Peptidase M12B domain. Disulfide bonds link cysteine 305-cysteine 385, cysteine 345-cysteine 369, and cysteine 347-cysteine 352. Histidine 330 provides a ligand contact to Zn(2+). The active site involves glutamate 331. Residues histidine 334 and histidine 339 each coordinate Zn(2+). An N-linked (GlcNAc...) asparagine glycan is attached at asparagine 368. The propeptide occupies 391–408 (LRTDTVSTPVSGNELLEA). Positions 398 to 479 (TPVSGNELLE…ADCPRNGLYG (82 aa)) constitute a Disintegrin domain. 6 cysteine pairs are disulfide-bonded: cysteine 412-cysteine 427, cysteine 414-cysteine 422, cysteine 421-cysteine 444, cysteine 435-cysteine 441, cysteine 440-cysteine 465, and cysteine 453-cysteine 472. The Cell attachment site motif lies at 457-459 (RGD).

It belongs to the venom metalloproteinase (M12B) family. P-II subfamily. P-IIa sub-subfamily. Monomer. Zn(2+) serves as cofactor. In terms of tissue distribution, expressed by the venom gland.

It is found in the secreted. In terms of biological role, impairs hemostasis in the envenomed animal. Its function is as follows. Inhibits platelet aggregation. In Protobothrops mucrosquamatus (Taiwan habu), this protein is Zinc metalloproteinase/disintegrin PMMP-1.